We begin with the raw amino-acid sequence, 258 residues long: Ribosomal RNA small subunit methyltransferase J (258 aa).

S-adenosyl-L-methionine is bound by residues 104 to 105, 120 to 121, and Asp175; these read RD and ER.

The protein belongs to the methyltransferase superfamily. RsmJ family.

The protein localises to the cytoplasm. It catalyses the reaction guanosine(1516) in 16S rRNA + S-adenosyl-L-methionine = N(2)-methylguanosine(1516) in 16S rRNA + S-adenosyl-L-homocysteine + H(+). Functionally, specifically methylates the guanosine in position 1516 of 16S rRNA. This chain is Ribosomal RNA small subunit methyltransferase J, found in Chromobacterium violaceum (strain ATCC 12472 / DSM 30191 / JCM 1249 / CCUG 213 / NBRC 12614 / NCIMB 9131 / NCTC 9757 / MK).